Reading from the N-terminus, the 630-residue chain is DNA mismatch repair protein MutL (630 aa).

Residues 398–408 are compositionally biased toward polar residues; the sequence is TQTNAFGSMAT. The disordered stretch occupies residues 398–425; sequence TQTNAFGSMATSRDSSRGSYSASESRQR.

Belongs to the DNA mismatch repair MutL/HexB family.

Its function is as follows. This protein is involved in the repair of mismatches in DNA. It is required for dam-dependent methyl-directed DNA mismatch repair. May act as a 'molecular matchmaker', a protein that promotes the formation of a stable complex between two or more DNA-binding proteins in an ATP-dependent manner without itself being part of a final effector complex. The sequence is that of DNA mismatch repair protein MutL from Shewanella baltica (strain OS185).